The chain runs to 82 residues: Putative Fe(2+) transport protein A (82 aa).

This sequence belongs to the FeoA family.

Might be involved in Fe(2+) ion uptake. The sequence is that of Putative Fe(2+) transport protein A from Methanocaldococcus jannaschii (strain ATCC 43067 / DSM 2661 / JAL-1 / JCM 10045 / NBRC 100440) (Methanococcus jannaschii).